We begin with the raw amino-acid sequence, 800 residues long: Probable inorganic carbon transporter subunit DabA (800 aa).

Residues Cys329, Asp331, His488, and Cys503 each contribute to the Zn(2+) site.

It belongs to the inorganic carbon transporter (TC 9.A.2) DabA family. In terms of assembly, forms a complex with DabB. Zn(2+) serves as cofactor.

It is found in the cell inner membrane. In terms of biological role, part of an energy-coupled inorganic carbon pump. In Roseobacter denitrificans (strain ATCC 33942 / OCh 114) (Erythrobacter sp. (strain OCh 114)), this protein is Probable inorganic carbon transporter subunit DabA.